The sequence spans 224 residues: Polysialic acid transport ATP-binding protein KpsT (224 aa).

In terms of domain architecture, ABC transporter spans 2–223 (IKIENLTKSY…EYKMYQDLDI (222 aa)). 38–45 (GRNGAGKS) contacts ATP.

The protein belongs to the ABC transporter superfamily.

The protein resides in the cell inner membrane. Putative ATP-binding protein, and an energy coupling component for the transport of polysialic acid across the cytoplasmic membrane. The chain is Polysialic acid transport ATP-binding protein KpsT (kpsT) from Escherichia coli.